The primary structure comprises 391 residues: UPF0229 protein BCB4264_A0587 (391 aa).

Over residues 1-16 the composition is skewed to polar residues; sequence MGEENQPNYTISQENW. Disordered stretches follow at residues 1–31 and 80–117; these read MGEENQPNYTISQENWSLHRKGYDDQQRHQE and HVGQGNGDSKVGDVVARDGSGGQKQKGPGKGQGAGDAA. The span at 21-31 shows a compositional bias: basic and acidic residues; it reads KGYDDQQRHQE. Over residues 98 to 115 the composition is skewed to gly residues; the sequence is GSGGQKQKGPGKGQGAGD.

This sequence belongs to the UPF0229 family.

This chain is UPF0229 protein BCB4264_A0587, found in Bacillus cereus (strain B4264).